The chain runs to 477 residues: tRNA-2-methylthio-N(6)-dimethylallyladenosine synthase (477 aa).

One can recognise an MTTase N-terminal domain in the interval 3 to 120; the sequence is KKLHIKTWGC…LPTMIKQVQE (118 aa). [4Fe-4S] cluster-binding residues include cysteine 12, cysteine 49, cysteine 83, cysteine 157, cysteine 161, and cysteine 164. Positions 143-375 constitute a Radical SAM core domain; it reads RAEGATAFVS…QHVINNQSMQ (233 aa). Residues 378 to 441 form the TRAM domain; that stretch reads RAMLGSTQRI…PNSLRGKFLR (64 aa).

It belongs to the methylthiotransferase family. MiaB subfamily. As to quaternary structure, monomer. It depends on [4Fe-4S] cluster as a cofactor.

It is found in the cytoplasm. The catalysed reaction is N(6)-dimethylallyladenosine(37) in tRNA + (sulfur carrier)-SH + AH2 + 2 S-adenosyl-L-methionine = 2-methylsulfanyl-N(6)-dimethylallyladenosine(37) in tRNA + (sulfur carrier)-H + 5'-deoxyadenosine + L-methionine + A + S-adenosyl-L-homocysteine + 2 H(+). Functionally, catalyzes the methylthiolation of N6-(dimethylallyl)adenosine (i(6)A), leading to the formation of 2-methylthio-N6-(dimethylallyl)adenosine (ms(2)i(6)A) at position 37 in tRNAs that read codons beginning with uridine. This chain is tRNA-2-methylthio-N(6)-dimethylallyladenosine synthase, found in Aeromonas hydrophila subsp. hydrophila (strain ATCC 7966 / DSM 30187 / BCRC 13018 / CCUG 14551 / JCM 1027 / KCTC 2358 / NCIMB 9240 / NCTC 8049).